We begin with the raw amino-acid sequence, 260 residues long: Cytochrome c oxidase subunit 2 (260 aa).

The Mitochondrial intermembrane segment spans residues 1–39; the sequence is MKFEWLFLTIAPCDAAEPWQLGFQDAATPMMQGIIDLHH. The helical transmembrane segment at 40-61 threads the bilayer; sequence DIFFFLILILVFVSRILVRALW. Topologically, residues 62–76 are mitochondrial matrix; it reads HFHYKKNPIPQRIVH. Residues 77–104 traverse the membrane as a helical segment; that stretch reads GTTIEILRTIFPSIIPMFIAIPSFALLY. At 105–260 the chain is on the mitochondrial intermembrane side; the sequence is SMDEVVVDPA…QLIPQTTGEA (156 aa). Cu cation-binding residues include His-186, Cys-221, Glu-223, Cys-225, and His-229. Residue Glu-223 coordinates Mg(2+).

Belongs to the cytochrome c oxidase subunit 2 family. In terms of assembly, component of the cytochrome c oxidase (complex IV, CIV), a multisubunit enzyme composed of a catalytic core of 3 subunits and several supernumerary subunits. The complex exists as a monomer or a dimer and forms supercomplexes (SCs) in the inner mitochondrial membrane with ubiquinol-cytochrome c oxidoreductase (cytochrome b-c1 complex, complex III, CIII). Cu cation is required as a cofactor.

The protein resides in the mitochondrion inner membrane. The enzyme catalyses 4 Fe(II)-[cytochrome c] + O2 + 8 H(+)(in) = 4 Fe(III)-[cytochrome c] + 2 H2O + 4 H(+)(out). Component of the cytochrome c oxidase, the last enzyme in the mitochondrial electron transport chain which drives oxidative phosphorylation. The respiratory chain contains 3 multisubunit complexes succinate dehydrogenase (complex II, CII), ubiquinol-cytochrome c oxidoreductase (cytochrome b-c1 complex, complex III, CIII) and cytochrome c oxidase (complex IV, CIV), that cooperate to transfer electrons derived from NADH and succinate to molecular oxygen, creating an electrochemical gradient over the inner membrane that drives transmembrane transport and the ATP synthase. Cytochrome c oxidase is the component of the respiratory chain that catalyzes the reduction of oxygen to water. Electrons originating from reduced cytochrome c in the intermembrane space (IMS) are transferred via the dinuclear copper A center (CU(A)) of subunit 2 and heme A of subunit 1 to the active site in subunit 1, a binuclear center (BNC) formed by heme A3 and copper B (CU(B)). The BNC reduces molecular oxygen to 2 water molecules using 4 electrons from cytochrome c in the IMS and 4 protons from the mitochondrial matrix. The sequence is that of Cytochrome c oxidase subunit 2 (COX2) from Glycine max (Soybean).